Here is a 129-residue protein sequence, read N- to C-terminus: Follitropin subunit beta (129 aa).

Positions 1–18 (MKSVQFCFLFCCWKAICC) are cleaved as a signal peptide. 6 disulfide bridges follow: Cys21-Cys69, Cys35-Cys84, Cys38-Cys122, Cys46-Cys100, Cys50-Cys102, and Cys105-Cys112. Asn25 and Asn42 each carry an N-linked (GlcNAc...) asparagine glycan.

This sequence belongs to the glycoprotein hormones subunit beta family. As to quaternary structure, heterodimer. The active follitropin is a heterodimer composed of an alpha chain/CGA shared with other hormones and a unique beta chain/FSHB shown here.

It is found in the secreted. Functionally, together with the alpha chain CGA constitutes follitropin, the follicle-stimulating hormone, and provides its biological specificity to the hormone heterodimer. Binds FSHR, a G protein-coupled receptor, on target cells to activate downstream signaling pathways. Follitropin is involved in follicle development and spermatogenesis in reproductive organs. This is Follitropin subunit beta (FSHB) from Oryctolagus cuniculus (Rabbit).